We begin with the raw amino-acid sequence, 492 residues long: Glutamyl-tRNA(Gln) amidotransferase subunit A (492 aa).

Residues K78 and S158 each act as charge relay system in the active site. S182 (acyl-ester intermediate) is an active-site residue.

This sequence belongs to the amidase family. GatA subfamily. As to quaternary structure, heterotrimer of A, B and C subunits.

It catalyses the reaction L-glutamyl-tRNA(Gln) + L-glutamine + ATP + H2O = L-glutaminyl-tRNA(Gln) + L-glutamate + ADP + phosphate + H(+). In terms of biological role, allows the formation of correctly charged Gln-tRNA(Gln) through the transamidation of misacylated Glu-tRNA(Gln) in organisms which lack glutaminyl-tRNA synthetase. The reaction takes place in the presence of glutamine and ATP through an activated gamma-phospho-Glu-tRNA(Gln). The sequence is that of Glutamyl-tRNA(Gln) amidotransferase subunit A from Rhodopseudomonas palustris (strain HaA2).